The sequence spans 710 residues: WD repeat-containing protein CG11141 (710 aa).

WD repeat units follow at residues 31-70 (FFPA…MQKL) and 133-172 (LHKC…HLSK). The disordered stretch occupies residues 283-307 (LNPKQRSEPSGTHHTSASTSSTRHS). Residues 292 to 307 (SGTHHTSASTSSTRHS) are compositionally biased toward low complexity. Thr488 is subject to Phosphothreonine. Ser553 bears the Phosphoserine mark. Disordered regions lie at residues 612-635 (ASIQ…GEPV) and 685-710 (DPLA…FLDN). Composition is skewed to polar residues over residues 613-624 (SIQTSSRENATN) and 694-704 (PATSDSNTSSE).

Belongs to the WD repeat KIAA0329 family.

This chain is WD repeat-containing protein CG11141, found in Drosophila melanogaster (Fruit fly).